Here is a 157-residue protein sequence, read N- to C-terminus: Peptide methionine sulfoxide reductase MsrB (157 aa).

Positions 14 to 137 (DNDLRERLTP…NSAALRFVPL (124 aa)) constitute a MsrB domain. The active-site Nucleophile is cysteine 126.

It belongs to the MsrB Met sulfoxide reductase family.

It carries out the reaction L-methionyl-[protein] + [thioredoxin]-disulfide + H2O = L-methionyl-(R)-S-oxide-[protein] + [thioredoxin]-dithiol. The sequence is that of Peptide methionine sulfoxide reductase MsrB from Deinococcus radiodurans (strain ATCC 13939 / DSM 20539 / JCM 16871 / CCUG 27074 / LMG 4051 / NBRC 15346 / NCIMB 9279 / VKM B-1422 / R1).